Consider the following 1433-residue polypeptide: Inositol hexakisphosphate and diphosphoinositol-pentakisphosphate kinase 1 (1433 aa).

Substrate is bound at residue 64–65; the sequence is KK. ATP contacts are provided by residues arginine 145, lysine 198, histidine 205, arginine 224, 248–251, and 257–259; these read EEFM and DVK. 224–225 provides a ligand contact to substrate; the sequence is RK. Residues lysine 259 and arginine 273 each coordinate substrate. ATP is bound by residues serine 275, aspartate 320, and 332–334; that span reads DVN. Residue 337 to 340 participates in substrate binding; it reads SFVK. A polyphosphoinositide-binding domain region spans residues 382 to 453; that stretch reads PTTSGTMMEL…VLDITRLLLA (72 aa). Residues 915–1020 form a disordered region; it reads GVEEEGSAPA…PTEMKQSGLG (106 aa). Residues serine 944 and serine 987 each carry the phosphoserine modification. Over residues 1005–1020 the composition is skewed to polar residues; the sequence is FSSSRPPTEMKQSGLG. Serine 1037 and serine 1073 each carry phosphoserine. Positions 1134 to 1143 are enriched in polar residues; sequence MHSSQASDNP. 2 disordered regions span residues 1134–1199 and 1235–1257; these read MHSS…DQPS and EPNQ…VSQP. A phosphoserine mark is found at serine 1145 and serine 1152. Positions 1168–1186 are enriched in low complexity; it reads SSGPSSTVSSAGPSSPTTV. Polar residues-rich tracts occupy residues 1187 to 1199 and 1236 to 1250; these read DGNS…DQPS and PNQS…TSQP.

This sequence belongs to the histidine acid phosphatase family. VIP1 subfamily. As to expression, widely expressed, with a higher expression in skeletal muscle, heart and brain.

The protein resides in the cytoplasm. Its subcellular location is the cytosol. It localises to the cell membrane. The enzyme catalyses 1D-myo-inositol hexakisphosphate + ATP = 1-diphospho-1D-myo-inositol 2,3,4,5,6-pentakisphosphate + ADP. The catalysed reaction is 5-diphospho-1D-myo-inositol 1,2,3,4,6-pentakisphosphate + ATP + H(+) = 1,5-bis(diphospho)-1D-myo-inositol 2,3,4,6-tetrakisphosphate + ADP. Its function is as follows. Bifunctional inositol kinase that acts in concert with the IP6K kinases IP6K1, IP6K2 and IP6K3 to synthesize the diphosphate group-containing inositol pyrophosphates diphosphoinositol pentakisphosphate, PP-InsP5, and bis-diphosphoinositol tetrakisphosphate, (PP)2-InsP4. PP-InsP5 and (PP)2-InsP4, also respectively called InsP7 and InsP8, regulate a variety of cellular processes, including apoptosis, vesicle trafficking, cytoskeletal dynamics, exocytosis, insulin signaling and neutrophil activation. Phosphorylates inositol hexakisphosphate (InsP6) at position 1 to produce PP-InsP5 which is in turn phosphorylated by IP6Ks to produce (PP)2-InsP4. Alternatively, phosphorylates PP-InsP5 at position 1, produced by IP6Ks from InsP6, to produce (PP)2-InsP4. Activated when cells are exposed to hyperosmotic stress. This chain is Inositol hexakisphosphate and diphosphoinositol-pentakisphosphate kinase 1, found in Homo sapiens (Human).